A 295-amino-acid polypeptide reads, in one-letter code: Pyridoxal 5'-phosphate synthase subunit PdxS (295 aa).

D25 serves as a coordination point for D-ribose 5-phosphate. The active-site Schiff-base intermediate with D-ribose 5-phosphate is K82. G154 contributes to the D-ribose 5-phosphate binding site. A D-glyceraldehyde 3-phosphate-binding site is contributed by R166. D-ribose 5-phosphate-binding positions include G215 and 236 to 237; that span reads GS.

Belongs to the PdxS/SNZ family. As to quaternary structure, in the presence of PdxT, forms a dodecamer of heterodimers.

It catalyses the reaction aldehydo-D-ribose 5-phosphate + D-glyceraldehyde 3-phosphate + L-glutamine = pyridoxal 5'-phosphate + L-glutamate + phosphate + 3 H2O + H(+). Its pathway is cofactor biosynthesis; pyridoxal 5'-phosphate biosynthesis. Functionally, catalyzes the formation of pyridoxal 5'-phosphate from ribose 5-phosphate (RBP), glyceraldehyde 3-phosphate (G3P) and ammonia. The ammonia is provided by the PdxT subunit. Can also use ribulose 5-phosphate and dihydroxyacetone phosphate as substrates, resulting from enzyme-catalyzed isomerization of RBP and G3P, respectively. The sequence is that of Pyridoxal 5'-phosphate synthase subunit PdxS from Bacillus cereus (strain Q1).